A 342-amino-acid chain; its full sequence is Pre-mRNA-splicing factor 18 (342 aa).

Position 1 is an N-acetylmethionine (methionine 1).

It belongs to the PRP18 family. In terms of assembly, heterodimer with PPIH. Interacts with PRPF4 and with the spliceosome. Part of a complex containing U4/U6 snRNPs.

Its subcellular location is the nucleus speckle. In terms of biological role, participates in the second step of pre-mRNA splicing. In Bos taurus (Bovine), this protein is Pre-mRNA-splicing factor 18 (PRPF18).